The chain runs to 296 residues: Putative S-adenosyl-L-methionine-dependent methyltransferase MAV_4764 (296 aa).

S-adenosyl-L-methionine-binding positions include Asp-121 and 150 to 151; that span reads DL.

The protein belongs to the UPF0677 family.

Functionally, exhibits S-adenosyl-L-methionine-dependent methyltransferase activity. This Mycobacterium avium (strain 104) protein is Putative S-adenosyl-L-methionine-dependent methyltransferase MAV_4764.